The following is a 416-amino-acid chain: Nuclear hormone receptor family member nhr-67 (416 aa).

The segment at residues 18 to 98 (DVDCRVCEDH…IGMNKDAVQH (81 aa)) is a DNA-binding region (nuclear receptor). 2 NR C4-type zinc fingers span residues 21–41 (CRVC…CDGC) and 57–86 (CKNK…LRKC). The segment at 331-398 (KTETEEGEDI…SSRPRHSIRS (68 aa)) is disordered. Residues 335–346 (EEGEDIEEEDDA) show a composition bias toward acidic residues. Residues 377 to 390 (SSTQPSSASSPSSS) are compositionally biased toward low complexity.

This sequence belongs to the nuclear hormone receptor family. In terms of tissue distribution, expressed in linker cell.

Its subcellular location is the nucleus. Its function is as follows. Orphan nuclear receptor that binds DNA containing an extended core motif half-site sequence 5'-AAGTCA-3'. In males, plays an essential role in the migration of the linker cell which guides gonad elongation during the L3 and L4 stages of larval development by negatively regulating the expression of netrin receptor unc-5 at the mid-L3 stage. Involved in the regulation of non-apoptotic cell death in the linker cell, acting upstream of or in parallel to transcription factor hsf-1. Represses hypoxia response genes, fmo-2 and acs-2, in both normoxic and hypoxic conditions, probably acting via repression of nuclear receptor nhr-49. The polypeptide is Nuclear hormone receptor family member nhr-67 (nhr-67) (Caenorhabditis elegans).